The sequence spans 247 residues: 2,3-bisphosphoglycerate-dependent phosphoglycerate mutase (247 aa).

Substrate contacts are provided by residues 8 to 15 (RHGESQWN), 21 to 22 (TG), Arg-60, 87 to 90 (ERHY), Lys-98, 114 to 115 (RR), and 183 to 184 (GN). The active-site Tele-phosphohistidine intermediate is the His-9. Catalysis depends on Glu-87, which acts as the Proton donor/acceptor.

This sequence belongs to the phosphoglycerate mutase family. BPG-dependent PGAM subfamily.

The catalysed reaction is (2R)-2-phosphoglycerate = (2R)-3-phosphoglycerate. It functions in the pathway carbohydrate degradation; glycolysis; pyruvate from D-glyceraldehyde 3-phosphate: step 3/5. Its function is as follows. Catalyzes the interconversion of 2-phosphoglycerate and 3-phosphoglycerate. This Chlorobium chlorochromatii (strain CaD3) protein is 2,3-bisphosphoglycerate-dependent phosphoglycerate mutase.